Consider the following 398-residue polypeptide: Elongation factor Tu (398 aa).

The tr-type G domain maps to 10-208 (KPHVNVGTIG…ALDSHIPEPT (199 aa)). The tract at residues 19–26 (GHIDHGKT) is G1. A GTP-binding site is contributed by 19 to 26 (GHIDHGKT). Residue Thr-26 participates in Mg(2+) binding. The segment at 60 to 64 (TKTVT) is G2. The segment at 83–86 (DCPG) is G3. GTP-binding positions include 83–87 (DCPGH) and 138–141 (NKCD). The tract at residues 138–141 (NKCD) is G4. Positions 176–178 (SSL) are G5.

The protein belongs to the TRAFAC class translation factor GTPase superfamily. Classic translation factor GTPase family. EF-Tu/EF-1A subfamily. Monomer.

The protein resides in the cytoplasm. The enzyme catalyses GTP + H2O = GDP + phosphate + H(+). In terms of biological role, GTP hydrolase that promotes the GTP-dependent binding of aminoacyl-tRNA to the A-site of ribosomes during protein biosynthesis. The polypeptide is Elongation factor Tu (Rhodopirellula baltica (strain DSM 10527 / NCIMB 13988 / SH1)).